The following is a 269-amino-acid chain: JmjC domain-containing protein 8 (269 aa).

Residues 1–24 (MAAAGRFGLLLLIVLWTMVTVVLP) form the signal peptide. Residues asparagine 135, asparagine 145, and asparagine 214 are each glycosylated (N-linked (GlcNAc...) asparagine). A JmjC domain is found at 147–269 (TEWAPLFQHY…TSVFISTFLG (123 aa)).

Oligomer. Dimer. Interacts with PKM; regulates angiogenesis and metabolism. N-glycosylated.

It is found in the endoplasmic reticulum lumen. The protein resides in the cytoplasm. Functions as a positive regulator of TNF-induced NF-kappaB signaling. Regulates angiogenesis and cellular metabolism through interaction with PKM. The protein is JmjC domain-containing protein 8 of Rattus norvegicus (Rat).